The following is a 1068-amino-acid chain: Carbamoyl phosphate synthase large chain (1068 aa).

The tract at residues 1–403 is carboxyphosphate synthetic domain; sequence MPKRTDINTI…SLQKALRGLE (403 aa). ATP is bound by residues R129, R169, G175, G176, Q208, V210, E215, G241, V242, H243, Q285, and E299. The region spanning 133–328 is the ATP-grasp 1 domain; sequence KEAMEKIGLS…IAKVAAKLAV (196 aa). 3 residues coordinate Mg(2+): Q285, E299, and N301. Residues Q285, E299, and N301 each contribute to the Mn(2+) site. Positions 404-548 are oligomerization domain; sequence TGICGFNLMS…YSTYEEECES (145 aa). Residues 549–930 are carbamoyl phosphate synthetic domain; it reads RPSDKKKIMI…AFLKAQLGAN (382 aa). The ATP-grasp 2 domain occupies 673-864; that stretch reads QQILHKLHLK…LAKIAARVMA (192 aa). R709, H748, L750, E755, G780, I781, H782, S783, Q823, and E835 together coordinate ATP. Mg(2+)-binding residues include Q823, E835, and N837. Mn(2+) contacts are provided by Q823, E835, and N837. The region spanning 931 to 1068 is the MGS-like domain; sequence ERIPKTGKVF…SLQDLHQRLL (138 aa). An allosteric domain region spans residues 931 to 1068; that stretch reads ERIPKTGKVF…SLQDLHQRLL (138 aa).

The protein belongs to the CarB family. In terms of assembly, composed of two chains; the small (or glutamine) chain promotes the hydrolysis of glutamine to ammonia, which is used by the large (or ammonia) chain to synthesize carbamoyl phosphate. Tetramer of heterodimers (alpha,beta)4. It depends on Mg(2+) as a cofactor. Requires Mn(2+) as cofactor.

The catalysed reaction is hydrogencarbonate + L-glutamine + 2 ATP + H2O = carbamoyl phosphate + L-glutamate + 2 ADP + phosphate + 2 H(+). It catalyses the reaction hydrogencarbonate + NH4(+) + 2 ATP = carbamoyl phosphate + 2 ADP + phosphate + 2 H(+). It participates in amino-acid biosynthesis; L-arginine biosynthesis; carbamoyl phosphate from bicarbonate: step 1/1. It functions in the pathway pyrimidine metabolism; UMP biosynthesis via de novo pathway; (S)-dihydroorotate from bicarbonate: step 1/3. Functionally, large subunit of the glutamine-dependent carbamoyl phosphate synthetase (CPSase). CPSase catalyzes the formation of carbamoyl phosphate from the ammonia moiety of glutamine, carbonate, and phosphate donated by ATP, constituting the first step of 2 biosynthetic pathways, one leading to arginine and/or urea and the other to pyrimidine nucleotides. The large subunit (synthetase) binds the substrates ammonia (free or transferred from glutamine from the small subunit), hydrogencarbonate and ATP and carries out an ATP-coupled ligase reaction, activating hydrogencarbonate by forming carboxy phosphate which reacts with ammonia to form carbamoyl phosphate. This is Carbamoyl phosphate synthase large chain from Pasteurella multocida (strain Pm70).